Consider the following 556-residue polypeptide: MALDSVKHLPIHGVSAFSSVTVEIKSFFSTVKPRKTSTFVYAFVVTFVALTVFLAFSPSPITVALAPSISSYVLPNITVSNSSNSSPSSLDSNFTTLRTPAPENLTAVTKNLTFESPVANGTTDTNAKTITIQFQTGHAKENISCPDNKTARDLDTHGARKAPLSEVLAVNSTASPKRKQRRKSSLRKVIESLKSCEFFEGDWVKDDSYPLYKPGSCNLIDEQFNCISNGRPDVDFQKLKWKPKQCSLPRLNGGKLLEMIRGRRLVFVGDSLNRNMWESLVCILKGSVKDESQVFEAHGRHQFRWEAEYSFVFKDYNCTVEFFASPFLVQEWEVTEKNGTKKETLRLDLVGKSSEQYKGADILVFNTGHWWTHEKTSKGEDYYQEGSTVHPKLDVDEAFRKALTTWGRWVDKNVNPKKSLVFFRGYSPSHFSGGQWNAGGACDDETEPIKNETYLTPYMLKMEILERVLRGMKTPVTYLNITRLTDYRKDAHPSIYRKQKLSAEESKSPLLYQDCSHWCLPGVPDSWNEIFYAELLVKLDQLGGKRRRKALKDHRS.

The chain crosses the membrane as a helical; Signal-anchor for type II membrane protein span at residues 38 to 58; the sequence is TFVYAFVVTFVALTVFLAFSP. The GDS motif motif lies at 269–271; it reads GDS. Residues 514 to 528 carry the DCXHWCLPGXXDXWN motif motif; the sequence is DCSHWCLPGVPDSWN.

This sequence belongs to the PC-esterase family. TBL subfamily. As to expression, not expressed in trichomes.

The protein resides in the membrane. Functionally, can complement TBR and is therefore functionally equivalent, but may work in different tissue. May act as a bridging protein that binds pectin and other cell wall polysaccharides. Probably involved in maintaining esterification of pectins. May be involved in the specific O-acetylation of cell wall polymers. This Arabidopsis thaliana (Mouse-ear cress) protein is Protein trichome birefringence-like 1 (TBL1).